Here is a 46-residue protein sequence, read N- to C-terminus: Photosystem II reaction center protein K (46 aa).

Positions 1 to 9 are excised as a propeptide; sequence MSTLPILLA. Residues 25–45 form a helical membrane-spanning segment; the sequence is LPSIPVLFLLLAFVWQAAVSF.

The protein belongs to the PsbK family. PSII is composed of 1 copy each of membrane proteins PsbA, PsbB, PsbC, PsbD, PsbE, PsbF, PsbH, PsbI, PsbJ, PsbK, PsbL, PsbM, PsbT, PsbX, PsbY, PsbZ, Psb30/Ycf12, at least 3 peripheral proteins of the oxygen-evolving complex and a large number of cofactors. It forms dimeric complexes.

The protein resides in the plastid. Its subcellular location is the chloroplast thylakoid membrane. Its function is as follows. One of the components of the core complex of photosystem II (PSII). PSII is a light-driven water:plastoquinone oxidoreductase that uses light energy to abstract electrons from H(2)O, generating O(2) and a proton gradient subsequently used for ATP formation. It consists of a core antenna complex that captures photons, and an electron transfer chain that converts photonic excitation into a charge separation. The sequence is that of Photosystem II reaction center protein K from Nephroselmis olivacea (Green alga).